The primary structure comprises 330 residues: MGSRKKEIALQVNISTQELWEEMLSSKGLTVVDVYQGWCGPCKPVVSLFQKMRIEVGLDLLHFALAEADRLDVLEKYRGKCEPTFLFYAGGELVAVVRGANAPLLQKTILDQLEAEKKVLAEGRERKVIKDEALSDEDECVSHGKNNGEDEDMVSSERTCTLAIIKPDAVAHGKTDEIIMKIQEAGFEILTNEERTMTEAEVRLFYQHKAGEEAFEKLVHHMCSGPSHLLILTRTEGFEDVVTTWRTVMGPRDPNVARREQPESLRAQYGTEMPFNAVHGSRDREDADRELALLFPSLKFSDKDTEAPQGGEAEATAGPTEALCFPEDVD.

The region spanning 11 to 115 (QVNISTQELW…QKTILDQLEA (105 aa)) is the Thioredoxin domain. An NDK region spans residues 157 to 303 (ERTCTLAIIK…LFPSLKFSDK (147 aa)). The disordered stretch occupies residues 300 to 330 (FSDKDTEAPQGGEAEATAGPTEALCFPEDVD). The span at 307–322 (APQGGEAEATAGPTEA) shows a compositional bias: low complexity.

Belongs to the NDK family. Monomer and homodimer. As to expression, detected at very low levels in testis, lung and brain.

It localises to the cytoplasm. Its subcellular location is the cytoskeleton. The protein localises to the cilium axoneme. The protein resides in the dynein axonemal particle. In terms of biological role, may be a regulator of microtubule physiology. The protein is Thioredoxin domain-containing protein 6 of Homo sapiens (Human).